We begin with the raw amino-acid sequence, 387 residues long: 1-hydroxy-2-naphthoate 1,2-dioxygenasee (387 aa).

Cupin type-2 domains follow at residues Phe103 to Asp171 and Val271 to Phe337.

As to quaternary structure, homohexamer. Requires Fe(2+) as cofactor.

The catalysed reaction is 1-hydroxy-2-naphthoate + O2 = (3Z)-4-(2-carboxyphenyl)-2-oxobut-3-enoate + H(+). Its function is as follows. Dioxygenase involved in phenanthrene catabolism by mediating cleavage of 1-hydroxy-2-naphthoate. This Nocardioides sp. (strain KP7) protein is 1-hydroxy-2-naphthoate 1,2-dioxygenasee (phdI).